Reading from the N-terminus, the 512-residue chain is Annexin A7 (512 aa).

The span at 14–38 (GYPGGDPSYPPAAQQAFPGGQFPPA) shows a compositional bias: low complexity. Disordered regions lie at residues 14 to 62 (GYPG…GYPH) and 146 to 190 (GGFS…AQPT). Residues 39 to 52 (AGGGAFPPASGGGN) are compositionally biased toward gly residues. Low complexity predominate over residues 164–182 (MPGQMPGQMPGQAPSGYPS). 4 Annexin repeats span residues 209-279 (FDAL…ALFM), 280-351 (PSTY…SIMA), 364-436 (QQAE…AVLQ), and 440-511 (NRPL…AISG).

It belongs to the annexin family.

Functionally, calcium/phospholipid-binding protein which promotes membrane fusion and is involved in exocytosis. This Xenopus laevis (African clawed frog) protein is Annexin A7 (anxa7).